Consider the following 391-residue polypeptide: Na(+)/H(+) antiporter NhaA (391 aa).

Helical transmembrane passes span 14–34 (AGGI…NSPL), 59–79 (LIHW…GLEV), 95–115 (SLPT…YLIF), 124–144 (VGWA…MALL), 154–174 (VFLL…IALF), 177–197 (TDLS…LIGL), 213–233 (LILW…GVII), 261–281 (FIIL…GMSL), 292–312 (IALG…YIAV), 331–351 (VAVM…LAFV), and 363–383 (LGIL…LSKV).

This sequence belongs to the NhaA Na(+)/H(+) (TC 2.A.33) antiporter family.

It is found in the cell inner membrane. It catalyses the reaction Na(+)(in) + 2 H(+)(out) = Na(+)(out) + 2 H(+)(in). Functionally, na(+)/H(+) antiporter that extrudes sodium in exchange for external protons. The sequence is that of Na(+)/H(+) antiporter NhaA from Shewanella pealeana (strain ATCC 700345 / ANG-SQ1).